The following is a 309-amino-acid chain: Metaxin-3 (309 aa).

The segment at 274–309 is disordered; that stretch reads MDDNLRRSPQNRPQKLSTLKPVGGAENSHSSDLLSH. 2 stretches are compositionally biased toward polar residues: residues 280–290 and 300–309; these read RSPQNRPQKLS and NSHSSDLLSH.

Belongs to the metaxin family. In terms of assembly, part of a large protein complex spanning both mitochondrial membranes termed the mitochondrial intermembrane space bridging (MIB) complex.

The protein resides in the mitochondrion. The protein localises to the mitochondrion outer membrane. In terms of biological role, could function in transport of proteins into the mitochondrion. The polypeptide is Metaxin-3 (mtx3) (Xenopus laevis (African clawed frog)).